The following is a 660-amino-acid chain: Putative ATP-dependent RNA helicase Pl10 (660 aa).

The segment covering 1–11 (MSHVAEEDELG) has biased composition (acidic residues). The interval 1 to 117 (MSHVAEEDEL…SRGGRSGFGK (117 aa)) is disordered. Serine 2 carries the N-acetylserine modification. Over residues 12–21 (LDQQLAGLDL) the composition is skewed to low complexity. The span at 24–34 (RDSQSGGSTAS) shows a compositional bias: polar residues. Over residues 44-66 (RNREAAKAFYDKDGSRWSKDKDA) the composition is skewed to basic and acidic residues. The residue at position 55 (lysine 55) is an N6-acetyllysine. Phosphoserine is present on residues serine 80, serine 84, and serine 89. Positions 93–103 (GRFDERGRSDY) are enriched in basic and acidic residues. Arginine 100 carries the omega-N-methylarginine modification. Serine 101 is modified (phosphoserine). A Phosphotyrosine modification is found at tyrosine 103. An Omega-N-methylarginine modification is found at arginine 109. Lysine 117 is modified (N6-acetyllysine). The short motif at 179–207 (ESFSDVEMGEIIMGNIELTRYTRPTPVQK) is the Q motif element. Serine 182 carries the post-translational modification Phosphoserine. Residue 199–206 (YTRPTPVQ) participates in ATP binding. Residues 210 to 402 (IPIIKEKRDL…RDFLDEYIFL (193 aa)) form the Helicase ATP-binding domain. Residue lysine 214 forms a Glycyl lysine isopeptide (Lys-Gly) (interchain with G-Cter in SUMO2) linkage. 223–230 (AQTGSGKT) contributes to the ATP binding site. The DEAD box motif lies at 346–349 (DEAD). A Helicase C-terminal domain is found at 413–574 (NITQKVVWVE…EVPSWLENMA (162 aa)). Residue serine 455 is modified to Phosphoserine. Arginine 590 carries the omega-N-methylarginine modification. Phosphoserine occurs at positions 592, 603, and 610. A disordered region spans residues 598 to 632 (RDYRQSSGASSSSFSSGRASNSRSGGGSHGSSRGF). The span at 602–620 (QSSGASSSSFSSGRASNSR) shows a compositional bias: low complexity. 2 positions are modified to omega-N-methylarginine: arginine 615 and arginine 630. A compositionally biased stretch (gly residues) spans 621 to 632 (SGGGSHGSSRGF).

The protein belongs to the DEAD box helicase family. DDX3/DED1 subfamily. Testis.

The catalysed reaction is ATP + H2O = ADP + phosphate + H(+). Putative ATP-dependent RNA helicase. Possible role in a key step of the spermatogenic process. This is Putative ATP-dependent RNA helicase Pl10 (D1Pas1) from Mus musculus (Mouse).